The primary structure comprises 160 residues: 6,7-dimethyl-8-ribityllumazine synthase (160 aa).

Residues Trp27, 59-61 (AIE), and 81-83 (VVI) each bind 5-amino-6-(D-ribitylamino)uracil. (2S)-2-hydroxy-3-oxobutyl phosphate is bound at residue 86–87 (DT). The active-site Proton donor is His89. Asn114 is a 5-amino-6-(D-ribitylamino)uracil binding site. Arg128 contributes to the (2S)-2-hydroxy-3-oxobutyl phosphate binding site.

The protein belongs to the DMRL synthase family. As to quaternary structure, homopentamer.

The enzyme catalyses (2S)-2-hydroxy-3-oxobutyl phosphate + 5-amino-6-(D-ribitylamino)uracil = 6,7-dimethyl-8-(1-D-ribityl)lumazine + phosphate + 2 H2O + H(+). It functions in the pathway cofactor biosynthesis; riboflavin biosynthesis; riboflavin from 2-hydroxy-3-oxobutyl phosphate and 5-amino-6-(D-ribitylamino)uracil: step 1/2. Its function is as follows. Catalyzes the formation of 6,7-dimethyl-8-ribityllumazine by condensation of 5-amino-6-(D-ribitylamino)uracil with 3,4-dihydroxy-2-butanone 4-phosphate. This is the penultimate step in the biosynthesis of riboflavin. The chain is 6,7-dimethyl-8-ribityllumazine synthase from Mycobacterium leprae (strain Br4923).